The primary structure comprises 735 residues: Receptor-type guanylate cyclase gcy-27 (735 aa).

Residue N11 is glycosylated (N-linked (GlcNAc...) asparagine). The helical transmembrane segment at 28 to 48 threads the bilayer; that stretch reads FIICTLPVPIYFVVVAIWTIN. Residues 188–465 form the Protein kinase domain; that stretch reads ALTSRRRVFG…IENLRNAIAI (278 aa). The 131-residue stretch at 538-668 folds into the Guanylate cyclase domain; that stretch reads TVMFVQICDF…DTVNFASRMQ (131 aa).

It belongs to the adenylyl cyclase class-4/guanylyl cyclase family. Expressed bilaterally in ASK, ASI and ASJ sensory neurons.

Its subcellular location is the cell membrane. It carries out the reaction GTP = 3',5'-cyclic GMP + diphosphate. In terms of biological role, guanylate cyclase involved in the production of the second messenger cGMP. May be involved in sensitivity to quinine by regulating egl-4 activity through the production of cGMP. Promotes the calcium flux to the cytoplasm in ASJ sensory neurons upon removal of a nitric oxide (NO) stimulus and is thereby involved in the behavioral avoidance response to NO-producing organisms like P.aeruginosa. The polypeptide is Receptor-type guanylate cyclase gcy-27 (Caenorhabditis elegans).